Reading from the N-terminus, the 49-residue chain is Large ribosomal subunit protein uL16 (49 aa).

Belongs to the universal ribosomal protein uL16 family. As to quaternary structure, part of the 50S ribosomal subunit.

Its function is as follows. Binds 23S rRNA and is also seen to make contacts with the A and possibly P site tRNAs. This Aquifex pyrophilus protein is Large ribosomal subunit protein uL16 (rplP).